We begin with the raw amino-acid sequence, 1097 residues long: RecBCD enzyme subunit RecC (1097 aa).

This sequence belongs to the RecC family. Heterotrimer of RecB, RecC and RecD. All subunits contribute to DNA-binding.

A helicase/nuclease that prepares dsDNA breaks (DSB) for recombinational DNA repair. Binds to DSBs and unwinds DNA via a highly rapid and processive ATP-dependent bidirectional helicase activity. Holoenzyme degrades any linearized DNA that is unable to undergo homologous recombination. In the holoenzyme this subunit recognizes the wild-type Chi sequence, and when added to isolated RecB increases its ATP-dependent helicase processivity. Unlike the case in E.coli, suppresses RecA-dependent homologous recombination, is instead required for single-strand annealing pathway repair of DSB. The polypeptide is RecBCD enzyme subunit RecC (Mycobacterium tuberculosis (strain ATCC 25618 / H37Rv)).